We begin with the raw amino-acid sequence, 449 residues long: L-seryl-tRNA(Sec) selenium transferase (449 aa).

At Lys286 the chain carries N6-(pyridoxal phosphate)lysine.

Belongs to the SelA family. Pyridoxal 5'-phosphate is required as a cofactor.

The protein resides in the cytoplasm. It catalyses the reaction L-seryl-tRNA(Sec) + selenophosphate + H(+) = L-selenocysteinyl-tRNA(Sec) + phosphate. Its pathway is aminoacyl-tRNA biosynthesis; selenocysteinyl-tRNA(Sec) biosynthesis; selenocysteinyl-tRNA(Sec) from L-seryl-tRNA(Sec) (bacterial route): step 1/1. Its function is as follows. Converts seryl-tRNA(Sec) to selenocysteinyl-tRNA(Sec) required for selenoprotein biosynthesis. The polypeptide is L-seryl-tRNA(Sec) selenium transferase (Sulfurimonas denitrificans (strain ATCC 33889 / DSM 1251) (Thiomicrospira denitrificans (strain ATCC 33889 / DSM 1251))).